The following is a 432-amino-acid chain: Glutamyl-tRNA reductase (432 aa).

Residues 49-52 (TCNR), Ser-101, 106-108 (EPQ), and Gln-112 contribute to the substrate site. Cys-50 (nucleophile) is an active-site residue. 181–186 (GAGETI) lines the NADP(+) pocket. Positions 408–432 (PEKPGYRHPPVATPIVRTDDANPAP) are disordered.

This sequence belongs to the glutamyl-tRNA reductase family. As to quaternary structure, homodimer.

It carries out the reaction (S)-4-amino-5-oxopentanoate + tRNA(Glu) + NADP(+) = L-glutamyl-tRNA(Glu) + NADPH + H(+). It participates in porphyrin-containing compound metabolism; protoporphyrin-IX biosynthesis; 5-aminolevulinate from L-glutamyl-tRNA(Glu): step 1/2. Functionally, catalyzes the NADPH-dependent reduction of glutamyl-tRNA(Glu) to glutamate 1-semialdehyde (GSA). In Xanthomonas campestris pv. campestris (strain B100), this protein is Glutamyl-tRNA reductase.